Here is an 84-residue protein sequence, read N- to C-terminus: Large ribosomal subunit protein bL31B-2 (84 aa).

This sequence belongs to the bacterial ribosomal protein bL31 family. Type B subfamily. As to quaternary structure, part of the 50S ribosomal subunit.

This Streptomyces coelicolor (strain ATCC BAA-471 / A3(2) / M145) protein is Large ribosomal subunit protein bL31B-2.